A 240-amino-acid chain; its full sequence is Peptidyl-tRNA hydrolase (240 aa).

Tyrosine 14 contacts tRNA. The Proton acceptor role is filled by histidine 19. Residues phenylalanine 64, asparagine 66, and asparagine 112 each contribute to the tRNA site. A disordered region spans residues glutamate 196–proline 227. Polar residues predominate over residues histidine 209 to alanine 218.

It belongs to the PTH family. As to quaternary structure, monomer.

The protein resides in the cytoplasm. It carries out the reaction an N-acyl-L-alpha-aminoacyl-tRNA + H2O = an N-acyl-L-amino acid + a tRNA + H(+). In terms of biological role, hydrolyzes ribosome-free peptidyl-tRNAs (with 1 or more amino acids incorporated), which drop off the ribosome during protein synthesis, or as a result of ribosome stalling. Functionally, catalyzes the release of premature peptidyl moieties from peptidyl-tRNA molecules trapped in stalled 50S ribosomal subunits, and thus maintains levels of free tRNAs and 50S ribosomes. In Mesorhizobium japonicum (strain LMG 29417 / CECT 9101 / MAFF 303099) (Mesorhizobium loti (strain MAFF 303099)), this protein is Peptidyl-tRNA hydrolase.